The chain runs to 139 residues: Large ribosomal subunit protein eL34 (139 aa).

The interval 113–139 (VSKPPKIAKAPAAAAAAKPAKTATKSK) is disordered.

The protein belongs to the eukaryotic ribosomal protein eL34 family.

This is Large ribosomal subunit protein eL34 (RpL34) from Ochlerotatus triseriatus (Eastern treehole mosquito).